An 89-amino-acid chain; its full sequence is Large ribosomal subunit protein bL27 (89 aa).

The protein belongs to the bacterial ribosomal protein bL27 family.

This chain is Large ribosomal subunit protein bL27, found in Afipia carboxidovorans (strain ATCC 49405 / DSM 1227 / KCTC 32145 / OM5) (Oligotropha carboxidovorans).